Reading from the N-terminus, the 300-residue chain is MDSYQEEEPVASTSGLQDLQTLSELVGPENAGEGDLVIAEEPEENPRRPRRYTKRDVKCVSYHAYKELEDKHPHHIKLQDWIPKPEEMSKSICKRLILCGLYSGEKAREILKKPFTVSWEQSETNPDCFIVSYTCIFCDAVIHDPMPVVWDSEVEIWVKYKPLRGIVGSAVFIMEKHQKNCSLVKPSTSCPEGPKPRRRHDPVLRCDMFEKHHKPRPKRSRKRSIDHESCASSGDTVANESGPLCTNTFWTPGPVLQGLLGESSNLPDLEVHMSGGPFWKEVYGDSILGPPSGSGEHSVL.

3 disordered regions span residues 1 to 20 (MDSY…QDLQ), 26 to 50 (VGPE…RRPR), and 185 to 237 (KPST…GDTV). The segment covering 11–20 (ASTSGLQDLQ) has biased composition (polar residues). The DNA-binding element occupies 89 to 200 (SKSICKRLIL…PEGPKPRRRH (112 aa)). Over residues 201–210 (DPVLRCDMFE) the composition is skewed to basic and acidic residues. Positions 211–222 (KHHKPRPKRSRK) are enriched in basic residues. Residues 214-223 (KPRPKRSRKR) carry the Nuclear localization signal motif. The segment at 224–300 (SIDHESCASS…PSGSGEHSVL (77 aa)) is transactivation domain.

Homodimer or homomultimer. Forms complexes with the host nuclear factors NFIA, NFIB, NFIC or NFIX.

The protein resides in the host nucleus. Transcriptional transactivator that activates the viral internal promoter (IP), thereby enhancing its own expression. This transactivation is repressed by nuclear factor I. Also transactivates the long terminal repeat (LTR) promoter, thereby inducing structural gene expression, initiating the late phase of infection. It is therefore a key regulator of viral gene expression. It directly binds to and activates DNA target sites of viral promoters and those of distinct cellular genes. Required for viral replication. The protein is Protein Bel-1 (bel1) of Pan troglodytes (Chimpanzee).